We begin with the raw amino-acid sequence, 112 residues long: Urease subunit beta (112 aa).

It belongs to the urease beta subunit family. In terms of assembly, heterotrimer of UreA (gamma), UreB (beta) and UreC (alpha) subunits. Three heterotrimers associate to form the active enzyme.

It localises to the cytoplasm. The catalysed reaction is urea + 2 H2O + H(+) = hydrogencarbonate + 2 NH4(+). The protein operates within nitrogen metabolism; urea degradation; CO(2) and NH(3) from urea (urease route): step 1/1. The sequence is that of Urease subunit beta from Polaromonas sp. (strain JS666 / ATCC BAA-500).